Consider the following 404-residue polypeptide: POU domain, class 2, transcription factor 3L (404 aa).

Disordered stretches follow at residues 1-29 and 44-67; these read MNRE…TLDF and TGIP…MTGE. Basic and acidic residues predominate over residues 16–29; sequence GHLENDAERDTLDF. The POU-specific domain occupies 187-235; the sequence is QGDVGLAMGKLYGNDFSQTTISRFEALNLSFKNMCKLKPLLEKWLNDAE. A DNA-binding region (homeobox) is located at residues 259–297; the sequence is KRKKRTSIETNIRLTLEKRFQDNPKPSSEEISMIAEQLV. The segment at 346-367 is disordered; it reads MTVTSSCSPGNSSRPSSPTCGL. Residues 350-363 show a composition bias toward low complexity; sequence SSCSPGNSSRPSSP.

Belongs to the POU transcription factor family. Class-2 subfamily.

The protein localises to the nucleus. Transcription factor that binds to the octamer motif (5'-ATTTGCAT-3') and regulates cell type-specific differentiation pathways. The protein is POU domain, class 2, transcription factor 3L (pou2f3.L) of Xenopus laevis (African clawed frog).